The primary structure comprises 238 residues: Probable transcriptional regulatory protein CTA_0499 (238 aa).

Positions 1–21 (MAGHSKWANTKHRKERADHKK) are disordered. Residues 9–21 (NTKHRKERADHKK) show a composition bias toward basic residues.

Belongs to the TACO1 family.

The protein resides in the cytoplasm. This is Probable transcriptional regulatory protein CTA_0499 from Chlamydia trachomatis serovar A (strain ATCC VR-571B / DSM 19440 / HAR-13).